We begin with the raw amino-acid sequence, 508 residues long: MPLEPSVRVVRELTSRGYNADREAVTLLAGADDPGAAVERAVAAAAADAATLTVSDVRAVLDAHTASSAAQTSAPASTPPDEATTHTDPSATDTPPNHDGGRAATADARSVEIDGDMTGASTGTGEYQDFVSVFRDRYDRLAAQLRGRVNHRPTSALASMPGGSDAAIVGMVNDIRSTTSGHWRVELEDTNGVFPVLVLKDRDVSDLVDDLLLDEVIAVSGTLADDGTILFADDIYFPEVPRTYSPSTADRSVQAALISDVHVGSQEFAADAWRSFADWLHTPAAESVEYLLIAGDMVEGVGVYPGQDEELDIVDIYDQYETFAEHLKDVPGDMEIVMIPGNHDAVRLAEPQPAFDEELRSIMRAHDARITSNPSTVTIDGVSVLLYHGVSLDEVIAEHPSDDVTYDDPQNAMELLLKKRHVAPPFGGRTRLAPEAEDHLAIDTVPDVFHTGHVHKLGVGIHHNVRLVNSGCWQHQTAFQESVNISPDVATAPILDLDTLDITVHKFS.

Residues 66–80 (ASSAAQTSAPASTPP) are compositionally biased toward low complexity. The tract at residues 66–122 (ASSAAQTSAPASTPPDEATTHTDPSATDTPPNHDGGRAATADARSVEIDGDMTGAST) is disordered. Polar residues predominate over residues 86–95 (HTDPSATDTP).

This sequence belongs to the DNA polymerase delta/II small subunit family. In terms of assembly, heterodimer of a large subunit and a small subunit.

The catalysed reaction is DNA(n) + a 2'-deoxyribonucleoside 5'-triphosphate = DNA(n+1) + diphosphate. The enzyme catalyses Exonucleolytic cleavage in the 3'- to 5'-direction to yield nucleoside 5'-phosphates.. Possesses two activities: a DNA synthesis (polymerase) and an exonucleolytic activity that degrades single-stranded DNA in the 3' to 5' direction. Has a template-primer preference which is characteristic of a replicative DNA polymerase. The chain is DNA polymerase II small subunit from Halobacterium salinarum (strain ATCC 29341 / DSM 671 / R1).